The primary structure comprises 921 residues: Probable dipeptidyl-aminopeptidase B (921 aa).

2 disordered regions span residues 1 to 33 (MAGH…TAST) and 45 to 66 (VAAN…RGER). Topologically, residues 1-109 (MAGHPEENAQ…NKSVDKKLRR (109 aa)) are cytoplasmic. The span at 10-22 (QLLSTEQESMSRN) shows a compositional bias: polar residues. Low complexity predominate over residues 23–33 (SSDSVASTAST). A helical; Signal-anchor for type II membrane protein transmembrane segment spans residues 110–130 (LIWIIGGVFIGAWVLALFIFL). The Vacuolar segment spans residues 131 to 921 (GKQAYKHSSE…VPLEIDAAKV (791 aa)). The interval 138–157 (SSESPHDPQATSSRGSGKKV) is disordered. The N-linked (GlcNAc...) asparagine glycan is linked to Asn362. Ser768 functions as the Charge relay system in the catalytic mechanism. N-linked (GlcNAc...) asparagine glycosylation is present at Asn822. Catalysis depends on charge relay system residues Asp845 and His878.

The protein belongs to the peptidase S9B family.

Its subcellular location is the vacuole membrane. The catalysed reaction is Release of an N-terminal dipeptide, Xaa-Yaa-|-Zaa-, from a polypeptide, preferentially when Yaa is Pro, provided Zaa is neither Pro nor hydroxyproline.. Type IV dipeptidyl-peptidase which removes N-terminal dipeptides sequentially from polypeptides having unsubstituted N-termini provided that the penultimate residue is proline. The chain is Probable dipeptidyl-aminopeptidase B (dapB) from Botryotinia fuckeliana (strain B05.10) (Noble rot fungus).